An 85-amino-acid polypeptide reads, in one-letter code: uncharacterized protein (85 aa).

2 helical membrane-spanning segments follow: residues 13–35 (KWLA…FQPL) and 59–81 (EGIV…HLLL).

It localises to the cell membrane. This is an uncharacterized protein from Archaeoglobus fulgidus (strain ATCC 49558 / DSM 4304 / JCM 9628 / NBRC 100126 / VC-16).